The primary structure comprises 634 residues: Probable potassium transport system protein Kup (634 aa).

A run of 12 helical transmembrane segments spans residues 19–39 (AIGL…TSPL), 62–82 (VLSL…VIFV), 113–133 (FVVV…MITP), 150–170 (GLEH…FLIQ), 177–197 (IGIL…ALGV), 225–245 (IGVA…ALYA), 259–279 (WFLL…ATIL), 291–311 (LLAP…ATVI), 349–369 (IYIG…VLGF), 379–399 (YGVA…VVIW), 406–426 (LWLG…FFAA), and 431–451 (VIQG…LMST).

It belongs to the HAK/KUP transporter (TC 2.A.72) family.

The protein resides in the cell inner membrane. The catalysed reaction is K(+)(in) + H(+)(in) = K(+)(out) + H(+)(out). Its function is as follows. Transport of potassium into the cell. Likely operates as a K(+):H(+) symporter. The protein is Probable potassium transport system protein Kup of Pseudomonas aeruginosa (strain UCBPP-PA14).